Reading from the N-terminus, the 700-residue chain is Suprabasin (700 aa).

The signal sequence occupies residues 1-23; sequence MYLVSLLSSCCLLVLLGTLPARA. Disordered regions lie at residues 133-158, 183-258, and 283-391; these read QGGSEAGKFGQGSHHAFGQGGNVANK, HAFG…VADK, and HAFG…GAHH. A coiled-coil region spans residues 488–546; it reads KEAEKVAHGVQNGVNQAQKEAEKVAHGVQNGVNQAQKEAEKVAHGVQNGVNQAQKEAEK. The span at 641-654 shows a compositional bias: polar residues; it reads GVNQPSKEANQLLN. Residues 641–669 are disordered; it reads GVNQPSKEANQLLNGSHQGQGGYGGQHGG. The span at 658-668 shows a compositional bias: gly residues; the sequence is QGQGGYGGQHG.

In terms of tissue distribution, detected in epidermis, in suprabasal keratinocytes. Detected in suprabasal layers of embryonic epidermis and in stratified layers of embryonic tongue and palate. Detected in adult stomach.

The protein resides in the secreted. In Mus musculus (Mouse), this protein is Suprabasin (Sbsn).